Here is a 382-residue protein sequence, read N- to C-terminus: uncharacterized protein (382 aa).

12 helical membrane-spanning segments follow: residues 8 to 28 (VLLLLCGLLLFTISIAVLNTL), 41 to 61 (WQVGMVSSSYFSGNLVGTLIA), 73 to 93 (SYHYSCILFALATCGLMLSVD), 94 to 114 (FWSWLGWRFFAGVACALIWVI), 133 to 153 (AAYMMVYYLGTVTGQLLLGVV), 157 to 177 (LLSVIPWVSALVITAMLPLLF), 208 to 228 (GCIISGVLLGSLYGLLPLYLS), 235 to 255 (ASVGWWMALLVSSGIIGQWPI), 274 to 294 (VVILGSIAILGNYALAPALFI), 295 to 315 (LGCAGFTLYPVAMAWACEKVS), 325 to 345 (ALLMSYTIGSLTGPTMTSLLM), and 349 to 369 (SDNLLFIMIAGVALVYLMMLL).

The protein belongs to the major facilitator superfamily. YcaD (TC 2.A.1.26) family.

It is found in the cell inner membrane. This is an uncharacterized protein from Yersinia enterocolitica serotype O:8 / biotype 1B (strain NCTC 13174 / 8081).